We begin with the raw amino-acid sequence, 593 residues long: F-box/LRR-repeat protein 17 (593 aa).

The region spanning 120-177 is the F-box domain; the sequence is DLDLQLDTDIVQPGRFHAVGLWEVLKRLPPSSLLMAARVCKGWRETSRKMWKAAEELR. 9 LRR repeats span residues 178–206, 207–232, 237–262, 276–304, 335–361, 362–387, 414–439, 477–502, and 503–525; these read IRVP…SLKI, ESDF…EITT, VNRI…KMEG, LSTL…SLEF, SLKL…SLVL, GINI…DLSG, CPNI…DCGM, LSLW…NLNL, and CSNL…YASG.

As to quaternary structure, part of a SCF (ASK-cullin-F-box) protein ligase complex. Interacts with SKP1A/ASK1, KRP4, KRP6 and KRP7. Expressed in developing pollen.

The protein localises to the nucleus. It functions in the pathway protein modification; protein ubiquitination. Essential protein for male fertility. Component of the SCF(ASK-cullin-F-box) E3 ubiquitin ligase complex SCF(FBL17), which mediates the ubiquitination and subsequent proteasomal degradation of target proteins. Enables the switch in cell cycle control leading to male germ cell lineage formation from microspores after meiosis. Targets CDKA-1 inhibitors the degradation specifically in male germ cells (e.g. KRP6 and KRP7) and thus enables CDKA-1 activation and germ cell S-phase progression. Promotes twin sperm cell production and double fertilization. This is F-box/LRR-repeat protein 17 (FBL17) from Arabidopsis thaliana (Mouse-ear cress).